The sequence spans 141 residues: Hemoglobin subunit alpha (141 aa).

The Globin domain maps to 1-141; sequence VLSASDKTNL…VSTVLTSKYR (141 aa). The residue at position 3 (serine 3) is a Phosphoserine. An N6-succinyllysine modification is found at lysine 7. Threonine 8 is subject to Phosphothreonine. Lysine 11 is modified (N6-succinyllysine). Lysine 16 is modified (N6-acetyllysine; alternate). Lysine 16 carries the post-translational modification N6-succinyllysine; alternate. Tyrosine 24 carries the phosphotyrosine modification. Serine 35 is modified (phosphoserine). N6-succinyllysine is present on lysine 40. The residue at position 49 (serine 49) is a Phosphoserine. Histidine 58 serves as a coordination point for O2. Histidine 87 serves as a coordination point for heme b. Serine 102 is modified (phosphoserine). The residue at position 108 (threonine 108) is a Phosphothreonine. The residue at position 124 (serine 124) is a Phosphoserine. Phosphothreonine occurs at positions 134 and 137. Serine 138 carries the phosphoserine modification.

Belongs to the globin family. Heterotetramer of two alpha chains and two beta chains. Red blood cells.

Its function is as follows. Involved in oxygen transport from the lung to the various peripheral tissues. The polypeptide is Hemoglobin subunit alpha (Blarina brevicauda (Northern short-tailed shrew)).